Here is a 1669-residue protein sequence, read N- to C-terminus: Polycomb group protein Asx (1669 aa).

The interval 90 to 109 (IPPEKKPMAPSEEAAVSTAP) is disordered. Residues 215 to 338 (PDSILASTNL…FEPFWGEKNS (124 aa)) enclose the DEUBAD domain. 2 short sequence motifs (LXXLL motif) span residues 224 to 228 (LRALL) and 244 to 248 (LIQLL). Residues 283–285 (NEF) carry the NEF motif motif. A compositionally biased stretch (basic and acidic residues) spans 336–352 (KNSRGKDKDKLESDCKN). Disordered stretches follow at residues 336-378 (KNSR…QQAT), 410-478 (SSTF…IVPN), 635-718 (FFTS…SAGA), 952-972 (MPHQ…QQQR), 1174-1193 (QQQS…QQQL), 1398-1437 (PGPG…PEQL), 1482-1505 (LHSI…TAGS), and 1587-1610 (SPTA…QHQH). 3 stretches are compositionally biased toward polar residues: residues 367–378 (ATSQQKPLQQAT), 413–425 (FPPT…VLNE), and 434–450 (PSSS…TIAT). Over residues 465-474 (KDSKQPKMDE) the composition is skewed to basic and acidic residues. Low complexity predominate over residues 635 to 650 (FFTSSSSSNTATTAAN). Basic and acidic residues predominate over residues 651–661 (KLEEHSDKPED). Residues 666–718 (IASSISGSTPASSITSTSCTSSSSSSASMSSSCSSSNSGSTTTAPTTSSSAGA) show a composition bias toward low complexity. Composition is skewed to low complexity over residues 1174-1192 (QQQS…QQQQ) and 1404-1436 (TATA…APEQ). Residues 1592 to 1610 (PSPINQQPQSQPTGTQHQH) are compositionally biased toward low complexity. Residues 1602–1666 (QPTGTQHQHP…IGAAKLCVAC (65 aa)) form a PHD-type; atypical zinc finger.

The protein belongs to the Asx family. In terms of assembly, component of the polycomb repressive deubiquitinase (PR-DUB) complex, at least composed of caly/calypso, Asx and sba (MBD5/6 homolog). Interacts (via DEUBAD domain) with caly/calypso (via ULD domain); the interaction produces a stable heterodimer with a composite binding site for ubiquitin. Two copies of the caly-Asx heterodimer assemble into a bidentate tetramer. Interacts (via PHD domain) with sba (probably via MBD domain); the interaction is important for the stability of the PR-DUB complex. Interacts with tant. Interacts with cyclin CycG. In terms of tissue distribution, highly expressed in nurse cells and deposited in oocytes late in oogenesis. Ubiquitous in early embryos. Late embryos show higher levels in CNS and neurectoderm.

The protein localises to the nucleus. Its subcellular location is the chromosome. Functionally, non-catalytic component of the polycomb repressive deubiquitinase (PR-DUB) complex, a complex that specifically mediates deubiquitination of histone H2A monoubiquitinated at 'Lys-119' (H2AK118ub1). Activator of the PR-DUB complex involved in ubiquitin binding and allosteric activation of calypso deubiquitinase activity. PR-DUB does not deubiquitinate monoubiquitinated histone H2B. PR-DUB is required to maintain the transcriptionally repressive state of homeotic genes throughout development. The PR-DUB complex has weak or no activity toward 'Lys-48'- and 'Lys-63'-linked polyubiquitin chains. Atypical Polycomb group protein, which may be involved in both Polycomb group (PcG) and trithorax group (trxG) complexes. PcG and trxG proteins act by forming multiprotein complexes, which are respectively required to maintain the transcriptionally repressive and transcriptionally active state of homeotic genes throughout development. PcG and trxG protein complexes are not required to initiate repression and activation, but to maintain it during later stages of development. The polypeptide is Polycomb group protein Asx (Drosophila melanogaster (Fruit fly)).